Reading from the N-terminus, the 291-residue chain is uncharacterized protein (291 aa).

Belongs to the pseudouridine synthase RluA family.

The enzyme catalyses a uridine in RNA = a pseudouridine in RNA. This is an uncharacterized protein from Synechocystis sp. (strain ATCC 27184 / PCC 6803 / Kazusa).